Here is a 397-residue protein sequence, read N- to C-terminus: Cysteine protease ATG4A (397 aa).

The active-site Nucleophile is the cysteine 79. Active-site residues include aspartate 279 and histidine 281. The LIR signature appears at 392–395 (FEIL).

It belongs to the peptidase C54 family.

It localises to the cytoplasm. The catalysed reaction is [protein]-C-terminal L-amino acid-glycyl-phosphatidylethanolamide + H2O = [protein]-C-terminal L-amino acid-glycine + a 1,2-diacyl-sn-glycero-3-phosphoethanolamine. Its function is as follows. Cysteine protease that plays a key role in autophagy by mediating both proteolytic activation and delipidation of ATG8 family proteins. The protease activity is required for proteolytic activation of ATG8 family proteins: cleaves the C-terminal amino acid of ATG8 proteins to reveal a C-terminal glycine. Exposure of the glycine at the C-terminus is essential for ATG8 proteins conjugation to phosphatidylethanolamine (PE) and insertion to membranes, which is necessary for autophagy. Protease activity is also required to counteract formation of high-molecular weight conjugates of ATG8 proteins (ATG8ylation): acts as a deubiquitinating-like enzyme that removes ATG8 conjugated to other proteins, such as ATG3. In addition to the protease activity, also mediates delipidation of ATG8 family proteins. Catalyzes delipidation of PE-conjugated forms of ATG8 proteins during macroautophagy. The protein is Cysteine protease ATG4A of Xenopus laevis (African clawed frog).